A 488-amino-acid polypeptide reads, in one-letter code: Long chain base biosynthesis protein 2a (488 aa).

A helical transmembrane segment spans residues 4–24; that stretch reads LPYTTALTTLFSYGLLFAFGQ. Residue K311 is modified to N6-(pyridoxal phosphate)lysine.

The protein belongs to the class-II pyridoxal-phosphate-dependent aminotransferase family. In terms of assembly, heterodimer with LCB1. Component of the serine palmitoyltransferase (SPT) complex, composed of LCB1 and LCB2. Pyridoxal 5'-phosphate is required as a cofactor.

The protein localises to the endoplasmic reticulum membrane. The enzyme catalyses L-serine + hexadecanoyl-CoA + H(+) = 3-oxosphinganine + CO2 + CoA. It participates in lipid metabolism; sphingolipid metabolism. Serine palmitoyltransferase (SPT). The heterodimer formed with LCB1 constitutes the catalytic core. This is Long chain base biosynthesis protein 2a from Oryza sativa subsp. japonica (Rice).